Consider the following 439-residue polypeptide: MIKIPKIGFVSLGCPKNLVDSERIITKLKAEGYDLVDSYDNADMVIVNTCGFLNSAIDESLEVIGEAIAENGKVLVTGCLGNKADLIKEKHSEVLSITGPQDYENLIEAVHTHAPIFVNDFVSLVPPQGIKLTPRHYSYLKISEGCNNTCTFCIIPDIRGKLKSRSIDNIMKEAEKLKNAGVKELLVISQDTSAYGVDIKYKSGIWNDKEYQSNILDLATALGDLDMWTRLHYVYPYPHVDKIVPLMAQGKILPYLDVPLQHSSPEVLKRMKRPAHTQKTLDRINKWRDICPDITIRSTFIVGFPGETEADFEHLLDFAEKAQLDRVGCFKYSEVEGAKANQFDNLISEEVKQQRLDEFMGLQAQISADKLQRFVGTEQQVIIDVINKDENYAIGRTKYDAPEVDGQVIIGDALERNLKVGEFATVEITESTEYDLIAD.

The region spanning 5 to 115 is the MTTase N-terminal domain; the sequence is PKIGFVSLGC…LIEAVHTHAP (111 aa). The [4Fe-4S] cluster site is built by Cys14, Cys50, Cys79, Cys146, Cys150, and Cys153. Residues 132 to 369 enclose the Radical SAM core domain; the sequence is LTPRHYSYLK…MGLQAQISAD (238 aa). Residues 372–439 enclose the TRAM domain; sequence QRFVGTEQQV…ESTEYDLIAD (68 aa).

This sequence belongs to the methylthiotransferase family. RimO subfamily. Requires [4Fe-4S] cluster as cofactor.

It is found in the cytoplasm. The enzyme catalyses L-aspartate(89)-[ribosomal protein uS12]-hydrogen + (sulfur carrier)-SH + AH2 + 2 S-adenosyl-L-methionine = 3-methylsulfanyl-L-aspartate(89)-[ribosomal protein uS12]-hydrogen + (sulfur carrier)-H + 5'-deoxyadenosine + L-methionine + A + S-adenosyl-L-homocysteine + 2 H(+). Catalyzes the methylthiolation of an aspartic acid residue of ribosomal protein uS12. The sequence is that of Ribosomal protein uS12 methylthiotransferase RimO from Francisella philomiragia subsp. philomiragia (strain ATCC 25017 / CCUG 19701 / FSC 153 / O#319-036).